Reading from the N-terminus, the 932-residue chain is Protein translocase subunit SecA, chloroplastic (932 aa).

95–102 provides a ligand contact to ATP; that stretch reads MRTGEGKT. Over residues 632–641 the composition is skewed to basic and acidic residues; the sequence is HESRRVDNQL. Residues 632–653 form a disordered region; sequence HESRRVDNQLRGRSGRQGDPGS.

This sequence belongs to the SecA family.

It localises to the plastid. The protein localises to the chloroplast stroma. Its subcellular location is the chloroplast thylakoid membrane. The catalysed reaction is ATP + H2O + chloroplast-proteinSide 1 = ADP + phosphate + chloroplast-proteinSide 2.. Functionally, has a central role in coupling the hydrolysis of ATP to the transfer of proteins across the thylakoid membrane. The protein is Protein translocase subunit SecA, chloroplastic of Ostreococcus lucimarinus (strain CCE9901).